A 558-amino-acid chain; its full sequence is 2-isopropylmalate synthase (558 aa).

A Pyruvate carboxyltransferase domain is found at 30–303; that stretch reads PIWCSVDLRD…DPKLDFSNIP (274 aa). Residues Asp39, His242, His244, and Asn278 each contribute to the Mg(2+) site. Positions 438–558 are regulatory domain; that stretch reads LNNTLCVQDF…GLVSALNRII (121 aa).

The protein belongs to the alpha-IPM synthase/homocitrate synthase family. LeuA type 2 subfamily. Homodimer. Mg(2+) is required as a cofactor.

The protein resides in the cytoplasm. It catalyses the reaction 3-methyl-2-oxobutanoate + acetyl-CoA + H2O = (2S)-2-isopropylmalate + CoA + H(+). The protein operates within amino-acid biosynthesis; L-leucine biosynthesis; L-leucine from 3-methyl-2-oxobutanoate: step 1/4. Functionally, catalyzes the condensation of the acetyl group of acetyl-CoA with 3-methyl-2-oxobutanoate (2-ketoisovalerate) to form 3-carboxy-3-hydroxy-4-methylpentanoate (2-isopropylmalate). This Helicobacter hepaticus (strain ATCC 51449 / 3B1) protein is 2-isopropylmalate synthase.